The primary structure comprises 273 residues: Pantothenate synthetase (273 aa).

27-34 (MGALHAGH) contributes to the ATP binding site. The active-site Proton donor is H34. Residue Q58 participates in (R)-pantoate binding. Q58 is a binding site for beta-alanine. Residue 144–147 (GKKD) participates in ATP binding. Q150 contacts (R)-pantoate. ATP is bound by residues V173 and 181-184 (LSSR).

The protein belongs to the pantothenate synthetase family. Homodimer.

The protein localises to the cytoplasm. The enzyme catalyses (R)-pantoate + beta-alanine + ATP = (R)-pantothenate + AMP + diphosphate + H(+). The protein operates within cofactor biosynthesis; (R)-pantothenate biosynthesis; (R)-pantothenate from (R)-pantoate and beta-alanine: step 1/1. Catalyzes the condensation of pantoate with beta-alanine in an ATP-dependent reaction via a pantoyl-adenylate intermediate. The sequence is that of Pantothenate synthetase from Campylobacter hominis (strain ATCC BAA-381 / DSM 21671 / CCUG 45161 / LMG 19568 / NCTC 13146 / CH001A).